Reading from the N-terminus, the 351-residue chain is Anaerobic nitrite reductase Glb1-2 (351 aa).

2 Globin domains span residues 13–162 (DFTE…VEMK) and 184–333 (CFTE…AEMK). Heme b contacts are provided by S56, K70, H74, K104, T108, H109, S227, K241, H245, K275, T279, and H280. The segment at 331-351 (EMKKTDHDHQTNVEDKSKPSS) is disordered.

It belongs to the plant globin family. As to quaternary structure, monomer. It depends on heme b as a cofactor. Predominantly expressed in nodules and roots, and, to a lesser extent, in leaves, at low levels in pods, but barely in stems, petioles, buds and flowers. In terms of tissue distribution, mainly expressed in nodules and roots at low levels, and barely in leaves. As to expression, expressed at very low levels in nodules, roots and pods.

It localises to the cytoplasm. Its subcellular location is the nucleus. It catalyses the reaction Fe(III)-heme b-[protein] + nitric oxide + H2O = Fe(II)-heme b-[protein] + nitrite + 2 H(+). In terms of biological role, phytoglobin that regulates the fine tuning of nitric oxide (NO) concentration in the cytosol in response to sudden changes in O(2) availability, and performs both symbiotic and nonsymbiotic functions. Exhibits NO dioxygenase activity in the presence of O(2) but nitrite reductase (NiR) activity in the absence of O(2) (e.g. during flooding or in waterlogged soil). May not function as an oxygen storage or transport protein. Extremely reactive toward the physiological ligands O(2), nitric oxide (NO), and nitrite with a very high affinity for O(2) through an hexacoordinate heme iron because of a very low dissociation constant. Functionally, very high affinity for O(2) through two hexacoordinate heme irons. Extremely reactive toward the physiological ligands O(2), nitric oxide (NO), and nitrite. Its function is as follows. Very high affinity for O(2) through a single hexacoordinate heme iron. Extremely reactive toward the physiological ligands O(2), nitric oxide (NO), and nitrite. The polypeptide is Anaerobic nitrite reductase Glb1-2 (Medicago truncatula (Barrel medic)).